The sequence spans 392 residues: MGIKHCCYILYFTLALVTLLQPVRSAEDLQQILPSANETRSLTTCGTYNIIDGCWRGKADWAENRKALADCAQGFAKGTIGGKDGDIYTVTSELDDDVANPKEGTLRFGAAQNRPLWIIFARDMVIRLDRELAINNDKTIDGRGAKVEIINAGFAIYNVKNIIIHNIIMHDIVVNPGGLIKSHDGPPVPRKGSDGDAIGISGGSQIWIDHCSLSKAVDGLIDAKHGSTHFTVSNCLFTQHQYLLLFWDFDERGMLCTVAFNKFTDNVDQRMPNLRHGFVQVVNNNYERWGSYALGGSAGPTILSQGNRFLASDIKKEVVGRYGESAMSESINWNWRSYMDVFENGAIFVPSGVDPVLTPEQNAGMIPAEPGEAVLRLTSSAGVLSCQPGAPC.

A signal peptide spans 1–25; it reads MGIKHCCYILYFTLALVTLLQPVRS. Residue Asn-37 is glycosylated (N-linked (GlcNAc...) asparagine). A disulfide bridge connects residues Cys-54 and Cys-71. 3 residues coordinate Ca(2+): Asp-194, Asp-218, and Asp-222. Residue Arg-270 is part of the active site.

The protein belongs to the polysaccharide lyase 1 family. Amb a subfamily. As to quaternary structure, monomer. It depends on Ca(2+) as a cofactor. In terms of processing, the N-terminus is blocked. Pollen and flowers.

It carries out the reaction Eliminative cleavage of (1-&gt;4)-alpha-D-galacturonan to give oligosaccharides with 4-deoxy-alpha-D-galact-4-enuronosyl groups at their non-reducing ends.. It participates in glycan metabolism; pectin degradation; 2-dehydro-3-deoxy-D-gluconate from pectin: step 2/5. Its function is as follows. Has pectate lyase activity. This chain is Pectate lyase 3, found in Ambrosia artemisiifolia (Common ragweed).